The sequence spans 1498 residues: MDGASAEQDGLQEDRSHSGPSSLPEAPLKPPGPLVPPDQQDKVQCAEVNRASTEGESPDGPGQGGLCQNGPTPPFPDPPSSLDPTTSPVGPDASPGVAGFHDNLRKSQGTSAEGSVRKEALQSLRLSLPMQETQLCSTDSPLPLEKEEQVRLQARKWLEEQLKQYRVKRQQERSSQPATKTRLFSTLDPELMLNPENLPRASTLAMTKEYSFLRTSVPRGPKVGSLGLPAHPREKKTSKSSKIRSLADYRTEDSNAGNSGGNVPAPDSTKGSLKQNRSSAASVVSEISLSPDTDDRLENTSLAGDSVSEVDGNDSDSSSYSSASTRGTYGILSKTVGTQDTPYMVNGQEIPADTLGQFPSIKDVLQAAAAEHQDQGQEVNGEVRSRRDSICSSVSLESSAAETQEEMLQVLKEKMRLEGQLEALSLEASQALKEKAELQAQLAALSTKLQAQVECSHSSQQRQDSLSSEVDTLKQSCWDLERAMTDLQNMLEAKNASLASSNNDLQVAEEQYQRLMAKVEDMQRSMLSKDNTVHDLRQQMTALQSQLQQVQLERTTLTSKLKASQAEISSLQSVRQWYQQQLALAQEARVRLQGEMAHIQVGQMTQAGLLEHLKLENVSLSQQLTETQHRSMKEKGRIAAQLQGIEADMLDQEAAFMQIQEAKTMVEEDLQRRLEEFEGERERLQRMADSAASLEQQLEQVKLTLLQRDQQLEALQQEHLDLMKQLTLTQEALQSREQSLDALQTHYDELQARLGELQGEAASREDTICLLQNEKIILEAALQAAKSGKEELDRGARRLEEGTEETSETLEKLREELAIKSGQVEHLQQETAALKKQMQKIKEQFLQQKVMVEAYRRDATSKDQLISELKATRKRLDSELKELRQELMQVHGEKRTAEAELSRLHREVAQVRQHMADLEGHLQSAQKERDEMETHLQSLQFDKEQMVAVTEANEALKKQIEELQQEARKAITEQKQKMRRLGSDLTSAQKEMKTKHKAYENAVGILSRRLQEALAAKEAADAELGQLRAQGGSSDSSLALHERIQALEAELQAVSHSKTLLEKELQEVIALTSQELEESREKVLELEDELQESRGFRKKIKRLEESNKKLALELEHEKGKLTGLGQSNAALREHNSILETALAKREADLVQLNLQVQAVLQRKEEEDRQMKHLVQALQASLEKEKEKVNSLKEQVAAAKVEAGHNRRHFKAASLELSEVKKELQAKEHLVQKLQAEADDLQIREGKHSQEIAQFQAELAEARAQLQLLQKQLDEQLSKQPVGNQEMENLKWEVDQKEREIQSLKQQLDLTEQQGRKELEGLQQLLQNVKSELEMAQEDLSMTQKDKFMLQAKVSELKNNMKTLLQQNQQLKLDLRRGAAKTRKEPKGEASSSNPATPIKIPDCPVPASLLEELLRPPPAVSKEPLKNLNSCLQQLKQEMDSLQRQMEEHALTVHESLSSWTPLEPATASPVPPGGHAGPRGDPQRHSQSRASKEGPGE.

An N-acetylmethionine modification is found at Met-1. The interval 1–118 is disordered; it reads MDGASAEQDG…GTSAEGSVRK (118 aa). Position 18 is a phosphoserine (Ser-18). Over residues 27 to 36 the composition is skewed to pro residues; it reads PLKPPGPLVP. At Ser-57 the chain carries Phosphoserine. A compositionally biased stretch (pro residues) spans 71–81; sequence PTPPFPDPPSS. Positions 121-141 are interaction with GOPC; that stretch reads LQSLRLSLPMQETQLCSTDSP. Disordered regions lie at residues 166–195 and 216–325; these read RVKR…MLNP and SVPR…SAST. The interval 172 to 257 is golgi-targeting domain; that stretch reads ERSSQPATKT…DYRTEDSNAG (86 aa). Polar residues-rich tracts occupy residues 173–184 and 269–291; these read RSSQPATKTRLF and TKGS…SLSP. Ser-272 is subject to Phosphoserine. The segment covering 315–324 has biased composition (low complexity); sequence SDSSSYSSAS. 3 positions are modified to phosphoserine: Ser-385, Ser-389, and Ser-465. The stretch at 394-1459 forms a coiled coil; sequence VSLESSAAET…ALTVHESLSS (1066 aa). Positions 789-801 are enriched in basic and acidic residues; sequence KEELDRGARRLEE. Disordered regions lie at residues 789 to 809, 974 to 993, 1376 to 1400, and 1440 to 1498; these read KEEL…TSET, QKQK…KEMK, RGAA…PIKI, and DSLQ…GPGE. Position 983 is a phosphoserine (Ser-983). A compositionally biased stretch (basic and acidic residues) spans 1376–1387; it reads RGAAKTRKEPKG. Ser-1392 is subject to Phosphoserine. A compositionally biased stretch (basic and acidic residues) spans 1440–1452; it reads DSLQRQMEEHALT.

In terms of assembly, homodimer. Interacts with GOLGA7. Isoform 1 interacts with GOPC while isoform 3 does not. Post-translationally, cleaved by caspases in apoptotic cells. Expressed in all tissues tested. Expressed in liver, testis, lung, heart, salivary gland and kidney.

The protein resides in the cytoplasm. Its subcellular location is the golgi apparatus. The protein localises to the golgi stack membrane. Functionally, golgi auto-antigen; probably involved in maintaining Golgi structure. This is Golgin subfamily A member 3 (GOLGA3) from Homo sapiens (Human).